Here is a 217-residue protein sequence, read N- to C-terminus: Small ribosomal subunit protein uS3c (217 aa).

The region spanning 43 to 117 (IKNYVQKNKR…KLNIAITRIA (75 aa)) is the KH type-2 domain.

Belongs to the universal ribosomal protein uS3 family. As to quaternary structure, part of the 30S ribosomal subunit.

It localises to the plastid. Its subcellular location is the chloroplast. In Platanus occidentalis (Sycamore), this protein is Small ribosomal subunit protein uS3c (rps3).